A 180-amino-acid polypeptide reads, in one-letter code: GTP cyclohydrolase 1 (180 aa).

Zn(2+) contacts are provided by C71, H74, and C142.

It belongs to the GTP cyclohydrolase I family. As to quaternary structure, toroid-shaped homodecamer, composed of two pentamers of five dimers.

The enzyme catalyses GTP + H2O = 7,8-dihydroneopterin 3'-triphosphate + formate + H(+). Its pathway is cofactor biosynthesis; 7,8-dihydroneopterin triphosphate biosynthesis; 7,8-dihydroneopterin triphosphate from GTP: step 1/1. The polypeptide is GTP cyclohydrolase 1 (folE) (Helicobacter pylori (strain J99 / ATCC 700824) (Campylobacter pylori J99)).